The sequence spans 294 residues: 4-hydroxy-tetrahydrodipicolinate synthase (294 aa).

Thr-47 serves as a coordination point for pyruvate. Tyr-135 functions as the Proton donor/acceptor in the catalytic mechanism. The active-site Schiff-base intermediate with substrate is Lys-163. Ile-206 contributes to the pyruvate binding site.

It belongs to the DapA family. In terms of assembly, homodimer.

Its subcellular location is the cytoplasm. It carries out the reaction L-aspartate 4-semialdehyde + pyruvate = (2S,4S)-4-hydroxy-2,3,4,5-tetrahydrodipicolinate + H2O + H(+). It participates in amino-acid biosynthesis; L-lysine biosynthesis via DAP pathway; (S)-tetrahydrodipicolinate from L-aspartate: step 3/4. Its function is as follows. Catalyzes the condensation of (S)-aspartate-beta-semialdehyde [(S)-ASA] and pyruvate to 4-hydroxy-tetrahydrodipicolinate (HTPA). The protein is 4-hydroxy-tetrahydrodipicolinate synthase of Staphylococcus carnosus (strain TM300).